The following is a 94-amino-acid chain: Integration host factor subunit beta (94 aa).

This sequence belongs to the bacterial histone-like protein family. In terms of assembly, heterodimer of an alpha and a beta chain.

Its function is as follows. This protein is one of the two subunits of integration host factor, a specific DNA-binding protein that functions in genetic recombination as well as in transcriptional and translational control. In Vibrio atlanticus (strain LGP32) (Vibrio splendidus (strain Mel32)), this protein is Integration host factor subunit beta.